The sequence spans 197 residues: Probable nicotinate-nucleotide adenylyltransferase (197 aa).

Belongs to the NadD family.

The enzyme catalyses nicotinate beta-D-ribonucleotide + ATP + H(+) = deamido-NAD(+) + diphosphate. It participates in cofactor biosynthesis; NAD(+) biosynthesis; deamido-NAD(+) from nicotinate D-ribonucleotide: step 1/1. Its function is as follows. Catalyzes the reversible adenylation of nicotinate mononucleotide (NaMN) to nicotinic acid adenine dinucleotide (NaAD). This is Probable nicotinate-nucleotide adenylyltransferase from Bordetella avium (strain 197N).